The sequence spans 1928 residues: Myosin-1 (1928 aa).

The Myosin N-terminal SH3-like domain occupies 8 to 71 (SSNMIVWIPD…RISDVFPVNP (64 aa)). Residues 75–791 (DKVENMSELT…VLADLEKQKD (717 aa)) enclose the Myosin motor domain. ATP is bound at residue 180–187 (GESGAGKT). The interval 460-529 (IGLLDIAGFE…LQLTIDLIES (70 aa)) is actin-binding. Polar residues predominate over residues 629 to 641 (SSSAGVEANISNQ). The disordered stretch occupies residues 629-657 (SSSAGVEANISNQEVKKSARTSTFKTTSS). In terms of domain architecture, IQ spans 794-823 (LNNIMIKLTATIRGYTVRKEITYHLQKLKK). Positions 856–1911 (SSNDMTRTKK…FWKSRYESTM (1056 aa)) form a coiled coil.

The protein belongs to the TRAFAC class myosin-kinesin ATPase superfamily. Myosin family.

Its function is as follows. Required for cell division. The protein is Myosin-1 (MYO1) of Saccharomyces cerevisiae (strain ATCC 204508 / S288c) (Baker's yeast).